The following is a 493-amino-acid chain: GTPase Der (493 aa).

Positions 3–166 (PVIALVGRPN…EALGIFPKDN (164 aa)) constitute an EngA-type G 1 domain. GTP-binding positions include 9-16 (GRPNVGKS), 56-60 (DTGGI), and 118-121 (NKVD). Residues 167-184 (VEEEGEGEPASEEVAEGE) are compositionally biased toward acidic residues. The tract at residues 167–195 (VEEEGEGEPASEEVAEGEEPTRIPGPSEK) is disordered. An EngA-type G 2 domain is found at 198 to 371 (IKIAIIGRPN…SVQESFRSAV (174 aa)). GTP is bound by residues 204 to 211 (GRPNVGKS), 251 to 255 (DTAGV), and 316 to 319 (NKWD). The 85-residue stretch at 372-456 (TRWPTSRLTS…PIRIEYKGGE (85 aa)) folds into the KH-like domain. Residues 454 to 463 (GGENPYEGKK) are compositionally biased toward basic and acidic residues. Residues 454–493 (GGENPYEGKKNSLTARQVNKKRRLMSHHKKAEKKKKDKRR) form a disordered region. Residues 471–493 (VNKKRRLMSHHKKAEKKKKDKRR) show a composition bias toward basic residues.

This sequence belongs to the TRAFAC class TrmE-Era-EngA-EngB-Septin-like GTPase superfamily. EngA (Der) GTPase family. Associates with the 50S ribosomal subunit.

In terms of biological role, GTPase that plays an essential role in the late steps of ribosome biogenesis. The sequence is that of GTPase Der from Pseudomonas aeruginosa (strain LESB58).